The primary structure comprises 97 residues: Large ribosomal subunit protein uL23 (97 aa).

It belongs to the universal ribosomal protein uL23 family. In terms of assembly, part of the 50S ribosomal subunit. Contacts protein L29, and trigger factor when it is bound to the ribosome.

In terms of biological role, one of the early assembly proteins it binds 23S rRNA. One of the proteins that surrounds the polypeptide exit tunnel on the outside of the ribosome. Forms the main docking site for trigger factor binding to the ribosome. In Methylococcus capsulatus (strain ATCC 33009 / NCIMB 11132 / Bath), this protein is Large ribosomal subunit protein uL23.